Consider the following 307-residue polypeptide: Ribosomal protein L11 methyltransferase (307 aa).

S-adenosyl-L-methionine contacts are provided by Thr-144, Gly-165, Asp-187, and Asn-235.

It belongs to the methyltransferase superfamily. PrmA family.

Its subcellular location is the cytoplasm. It carries out the reaction L-lysyl-[protein] + 3 S-adenosyl-L-methionine = N(6),N(6),N(6)-trimethyl-L-lysyl-[protein] + 3 S-adenosyl-L-homocysteine + 3 H(+). Its function is as follows. Methylates ribosomal protein L11. The chain is Ribosomal protein L11 methyltransferase from Psychrobacter sp. (strain PRwf-1).